The following is a 344-amino-acid chain: L-rhamnose-proton symporter (344 aa).

Helical transmembrane passes span 4–24 (AITM…CFYA), 38–58 (WSVG…ALLL), 68–88 (FSLS…IGNI), 101–121 (MGIG…TPII), 137–157 (TLLG…AGQL), 175–195 (LVLA…MNAA), 214–234 (LPSY…FCFI), 259–279 (VLLS…YAWG), 290–310 (ISWM…GLVL), and 323–343 (VLSL…IGMA).

The protein belongs to the L-rhamnose transporter (TC 2.A.7.6) family.

The protein resides in the cell inner membrane. It carries out the reaction L-rhamnopyranose(in) + H(+)(in) = L-rhamnopyranose(out) + H(+)(out). In terms of biological role, uptake of L-rhamnose across the cytoplasmic membrane with the concomitant transport of protons into the cell (symport system). The chain is L-rhamnose-proton symporter from Shigella dysenteriae serotype 1 (strain Sd197).